We begin with the raw amino-acid sequence, 511 residues long: Restriction of telomere capping protein 5 (511 aa).

In terms of domain architecture, TLDc spans 274–499 (AILSPLIHAQ…IQDLEVIGVD (226 aa)).

This sequence belongs to the RTC5 family.

The protein localises to the cytoplasm. The protein resides in the nucleus. In terms of biological role, may be involved in a process influencing telomere capping. The sequence is that of Restriction of telomere capping protein 5 (rtc5) from Schizosaccharomyces pombe (strain 972 / ATCC 24843) (Fission yeast).